Reading from the N-terminus, the 133-residue chain is Transcription antitermination protein NusB (133 aa).

The protein belongs to the NusB family.

In terms of biological role, involved in transcription antitermination. Required for transcription of ribosomal RNA (rRNA) genes. Binds specifically to the boxA antiterminator sequence of the ribosomal RNA (rrn) operons. This Clostridium botulinum (strain Alaska E43 / Type E3) protein is Transcription antitermination protein NusB.